The chain runs to 337 residues: MGGEVSNKTWVFKKSPSSLPEPGVHTAFEDRPLSLVAPPGGLVIKLLTAGLDPHQRDRMRGAGNVDYVPGYEVNEPITNFSIAKVIRSDNDVFEEGSLIAGSLPIAEYGIIPRELIDARAMASPLVWKVSNDYNLDVKHYVGTLGLAGMTAWNSFYGLVKAVKGETIWVNAASSSVGEVVVQLAKIEGMKVIASVSSDDKLDYVVNELGADVGFNYRKEPVGKALKPAIENMKWFGRIISCGTASQYNKPVEEQYGVTNLSEIFRRRIKIQGFIFWDDNIYTDNIENFKATMPKWVSEGKIKSRYTQFEGIEQADKAFLSMFTGGSHGKTVLKISDP.

This sequence belongs to the zinc-containing alcohol dehydrogenase family. Quinone oxidoreductase subfamily.

It participates in mycotoxin biosynthesis. Dehydrogenase; part of the gene cluster that mediates the biosynthesis of fusaric acid, a mycotoxin with low to moderate toxicity to animals and humans, but with high phytotoxic properties. L-aspartate is suggested as fusaric acid amino acid precursor that is activated and further processed to O-acetyl-L-homoserine by cluster enzymes aspartate kinase FUB3 and homoserine O-acetyltransferase FUB5, as well as enzymes of the primary metabolism. The polyketide synthase (PKS) FUB1 generates the triketide trans-2-hexenal which is presumptively released by the hydrolase FUB4 and linked to the NRPS-bound amino acid precursor by NAD(P)-dependent dehydrogenase FUB6. FUB1, FUB4, and the non-canonical NRPS Fub8 may form an enzyme complex. Further processing of the NRPS-bound intermediate might be carried out by FUB6 and the O-acetylhomoserine FUB7, enabling a spontaneous electrocyclization to close the carbon backbone of fusaric acid. Dihydrofusaric acid is likely to be released via reduction by the thioester reductase (TR) domain of FUB8 whereupon the final oxidation to fusaric acid may (also) be performed by the FMN-dependent dehydrogenase FUB9. This is Dehydrogenase FUB6 from Gibberella fujikuroi (strain CBS 195.34 / IMI 58289 / NRRL A-6831) (Bakanae and foot rot disease fungus).